The following is a 444-amino-acid chain: Ribitol-5-phosphate xylosyltransferase 1 (444 aa).

The Cytoplasmic segment spans residues 1-9; sequence MRLTRTRLC. Residues 10-30 traverse the membrane as a helical; Signal-anchor for type II membrane protein segment; sequence SLLVALYCLFSIYAAYHVFFG. The Extracellular portion of the chain corresponds to 31 to 444; that stretch reads RRRRPLGTTS…ESSFFINNKV (414 aa). The interval 38–79 is disordered; it reads TTSRNSRKAAAAQAKERRGREQSALESEEWNPWEGDEKNEQR. Residues 51–60 are compositionally biased toward basic and acidic residues; the sequence is AKERRGREQS.

Belongs to the RXYLT1 family. As to quaternary structure, forms a complex composed of FKTN/fukutin, FKRP and RXYLT1/TMEM5.

The protein resides in the golgi apparatus membrane. The enzyme catalyses 3-O-[Rib-ol-P-Rib-ol-P-3-beta-D-GalNAc-(1-&gt;3)-beta-D-GlcNAc-(1-&gt;4)-(O-6-P-alpha-D-Man)]-Thr-[protein] + UDP-alpha-D-xylose = 3-O-[beta-D-Xyl-(1-&gt;4)-Rib-ol-P-Rib-ol-P-3-beta-D-GalNAc-(1-&gt;3)-beta-D-GlcNAc-(1-&gt;4)-(O-6-P-alpha-D-Man)]-Thr-[protein] + UDP + H(+). It functions in the pathway protein modification; protein glycosylation. In terms of biological role, acts as a UDP-D-xylose:ribitol-5-phosphate beta1,4-xylosyltransferase, which catalyzes the transfer of UDP-D-xylose to ribitol 5-phosphate (Rbo5P) to form the Xylbeta1-4Rbo5P linkage on O-mannosyl glycan. Participates in the biosynthesis of the phosphorylated O-mannosyl trisaccharide (N-acetylgalactosamine-beta-3-N-acetylglucosamine-beta-4-(phosphate-6-)mannose), a carbohydrate structure present in alpha-dystroglycan (DAG1), which is required for binding laminin G-like domain-containing extracellular proteins with high affinity. The polypeptide is Ribitol-5-phosphate xylosyltransferase 1 (Mus musculus (Mouse)).